We begin with the raw amino-acid sequence, 78 residues long: Translation initiation factor IF-1, chloroplastic (78 aa).

Residues M1 to R72 form the S1-like domain.

Belongs to the IF-1 family. Component of the 30S ribosomal translation pre-initiation complex which assembles on the 30S ribosome in the order IF-2 and IF-3, IF-1 and N-formylmethionyl-tRNA(fMet); mRNA recruitment can occur at any time during PIC assembly.

The protein localises to the plastid. It localises to the chloroplast. Its function is as follows. One of the essential components for the initiation of protein synthesis. Stabilizes the binding of IF-2 and IF-3 on the 30S subunit to which N-formylmethionyl-tRNA(fMet) subsequently binds. Helps modulate mRNA selection, yielding the 30S pre-initiation complex (PIC). Upon addition of the 50S ribosomal subunit IF-1, IF-2 and IF-3 are released leaving the mature 70S translation initiation complex. The protein is Translation initiation factor IF-1, chloroplastic of Chaetosphaeridium globosum (Charophycean green alga).